Reading from the N-terminus, the 456-residue chain is PTS system sucrose-specific EIIBC component (456 aa).

Residues 4–87 (EQISRSLLPL…IQAAGISESS (84 aa)) form the PTS EIIB type-1 domain. Residue C26 is the Phosphocysteine intermediate; for EIIB activity of the active site. Residues 107–456 (RLLSNIFVPI…LTLKYKTDAE (350 aa)) enclose the PTS EIIC type-1 domain. 10 helical membrane-spanning segments follow: residues 112–132 (IFVP…LLGM), 144–164 (ALYI…PILI), 181–201 (TLGG…AAGF), 209–229 (IEVA…AVWF), 247–267 (LILT…LLIG), 288–308 (AGWL…ITGI), 329–349 (FLLP…FAVW), 360–380 (ITLP…IFGI), 388–408 (FIAA…MHVY), and 428–448 (LLNY…LSLT).

The protein resides in the cell inner membrane. The enzyme catalyses N(pros)-phospho-L-histidyl-[protein](out) + sucrose = sucrose 6(G)-phosphate(in) + L-histidyl-[protein]. In terms of biological role, the phosphoenolpyruvate-dependent sugar phosphotransferase system (sugar PTS), a major carbohydrate active transport system, catalyzes the phosphorylation of incoming sugar substrates concomitantly with their translocation across the cell membrane. This system is involved in sucrose transport. This Klebsiella pneumoniae protein is PTS system sucrose-specific EIIBC component.